The following is an 80-amino-acid chain: Acyl carrier protein (80 aa).

The Carrier domain maps to 4-79; sequence EDIFSKVKDI…DAVDFIASKA (76 aa). Ser39 carries the O-(pantetheine 4'-phosphoryl)serine modification.

The protein belongs to the acyl carrier protein (ACP) family. 4'-phosphopantetheine is transferred from CoA to a specific serine of apo-ACP by AcpS. This modification is essential for activity because fatty acids are bound in thioester linkage to the sulfhydryl of the prosthetic group.

Its subcellular location is the cytoplasm. The protein operates within lipid metabolism; fatty acid biosynthesis. Functionally, carrier of the growing fatty acid chain in fatty acid biosynthesis. This is Acyl carrier protein from Synechococcus elongatus (strain ATCC 33912 / PCC 7942 / FACHB-805) (Anacystis nidulans R2).